The primary structure comprises 100 residues: UPF0473 protein LMHCC_1068 (100 aa).

The protein belongs to the UPF0473 family.

The protein is UPF0473 protein LMHCC_1068 of Listeria monocytogenes serotype 4a (strain HCC23).